The chain runs to 206 residues: Large ribosomal subunit protein uL3 (206 aa).

Residues 127–151 form a disordered region; it reads SGGPSSHGSKFHRHLGGTGQATTPA.

It belongs to the universal ribosomal protein uL3 family. As to quaternary structure, part of the 50S ribosomal subunit. Forms a cluster with proteins L14 and L19.

One of the primary rRNA binding proteins, it binds directly near the 3'-end of the 23S rRNA, where it nucleates assembly of the 50S subunit. In Borreliella afzelii (strain PKo) (Borrelia afzelii), this protein is Large ribosomal subunit protein uL3.